Consider the following 383-residue polypeptide: Acetylornithine deacetylase (383 aa).

Histidine 80 is a Zn(2+) binding site. The active site involves aspartate 82. Zn(2+) is bound at residue aspartate 112. Residue glutamate 144 is part of the active site. Residues glutamate 145, glutamate 169, and histidine 355 each contribute to the Zn(2+) site.

The protein belongs to the peptidase M20A family. ArgE subfamily. Homodimer. Zn(2+) serves as cofactor. Requires Co(2+) as cofactor. Glutathione is required as a cofactor.

Its subcellular location is the cytoplasm. The enzyme catalyses N(2)-acetyl-L-ornithine + H2O = L-ornithine + acetate. It participates in amino-acid biosynthesis; L-arginine biosynthesis; L-ornithine from N(2)-acetyl-L-ornithine (linear): step 1/1. Its function is as follows. Catalyzes the hydrolysis of the amide bond of N(2)-acetylated L-amino acids. Cleaves the acetyl group from N-acetyl-L-ornithine to form L-ornithine, an intermediate in L-arginine biosynthesis pathway, and a branchpoint in the synthesis of polyamines. The chain is Acetylornithine deacetylase from Shigella boydii serotype 18 (strain CDC 3083-94 / BS512).